The sequence spans 258 residues: Probable N-acetylglucosaminyl-phosphatidylinositol de-N-acetylase (258 aa).

The disordered stretch occupies residues 147–170; that stretch reads KSSSTTTTSTTSSSSSSSSLSNRT. Over residues 148 to 170 the composition is skewed to low complexity; that stretch reads SSSTTTTSTTSSSSSSSSLSNRT.

It belongs to the PIGL family.

The protein localises to the endoplasmic reticulum membrane. It carries out the reaction a 6-(N-acetyl-alpha-D-glucosaminyl)-1-(1,2-diacyl-sn-glycero-3-phospho)-1D-myo-inositol + H2O = a 6-(alpha-D-glucosaminyl)-1-(1,2-diacyl-sn-glycero-3-phospho)-1D-myo-inositol + acetate. The protein operates within glycolipid biosynthesis; glycosylphosphatidylinositol-anchor biosynthesis. In terms of biological role, involved in the second step of GPI biosynthesis. De-N-acetylation of N-acetylglucosaminyl-phosphatidylinositol. The sequence is that of Probable N-acetylglucosaminyl-phosphatidylinositol de-N-acetylase (pigl) from Dictyostelium discoideum (Social amoeba).